Consider the following 283-residue polypeptide: Thymidylate synthase (283 aa).

R22 provides a ligand contact to dUMP. The active-site Nucleophile is the C160. Residues 180–183, N191, and 221–223 each bind dUMP; these read RSCD and HIY. D183 contributes to the (6R)-5,10-methylene-5,6,7,8-tetrahydrofolate binding site. S282 is a binding site for (6R)-5,10-methylene-5,6,7,8-tetrahydrofolate.

It belongs to the thymidylate synthase family. Bacterial-type ThyA subfamily. In terms of assembly, homodimer.

It is found in the cytoplasm. The enzyme catalyses dUMP + (6R)-5,10-methylene-5,6,7,8-tetrahydrofolate = 7,8-dihydrofolate + dTMP. It participates in pyrimidine metabolism; dTTP biosynthesis. In terms of biological role, catalyzes the reductive methylation of 2'-deoxyuridine-5'-monophosphate (dUMP) to 2'-deoxythymidine-5'-monophosphate (dTMP) while utilizing 5,10-methylenetetrahydrofolate (mTHF) as the methyl donor and reductant in the reaction, yielding dihydrofolate (DHF) as a by-product. This enzymatic reaction provides an intracellular de novo source of dTMP, an essential precursor for DNA biosynthesis. The protein is Thymidylate synthase of Pseudoalteromonas translucida (strain TAC 125).